The sequence spans 448 residues: uncharacterized protein (448 aa).

Topologically, residues 1-50 (MAPEIFVKFKCASRDIKLLWASVFLRLLSYGLTNQVLTLFLNAINMTEDK) are extracellular. A helical transmembrane segment spans residues 51–71 (IGLFMSLTLAGDVICSYILTW). Residues 72–93 (YADSWGRRRVLVYGCAMMLLSG) lie on the Cytoplasmic side of the membrane. The chain crosses the membrane as a helical span at residues 94–114 (LVFSFSENFTLLLVFAIFGVI). Residues 115 to 146 (SPSSDEVGPFKSIEEAMIAHLSPHNARPEIYA) are Extracellular-facing. A helical transmembrane segment spans residues 147 to 167 (IHALVGTIGSALGAIICGIFV). Residues 168-184 (DLLKRTGLAATDLQCYK) lie on the Cytoplasmic side of the membrane. Residues 185–205 (LVFLLYAFFAFCKMVIMLLLS) form a helical membrane-spanning segment. The Extracellular portion of the chain corresponds to 206–260 (DATELDGHYEHTDCNEETAEPLDVNDETAPLMRQATHPEERSNKLSKETVSVLMK). The helical transmembrane segment at 261 to 281 (LLVIFMVDSLGSGFMTSGWMV) threads the bilayer. At 282–287 (YYYSKQ) the chain is on the cytoplasmic side. A helical membrane pass occupies residues 288 to 308 (FLMGSLALGTLFFITQLVMAS). Residues 309–333 (STIPSSIIARCFGPVRATLLVQIPS) are Extracellular-facing. Residues 334 to 354 (GIFSILIPMAKNYLPLSILFL) traverse the membrane as a helical segment. Over 355–386 (NLHFATTAMDVTPRQILLTNIIKPRDLTKVMG) the chain is Cytoplasmic. ATP is bound at residue 386–393 (GVVNIGKT). The chain crosses the membrane as a helical span at residues 387-407 (VVNIGKTFARCVGPIFTGILA). Residues 408-416 (NNNYLWLCY) are Extracellular-facing. The chain crosses the membrane as a helical span at residues 417–437 (IISGSLVITADLILACMFLGV). Topologically, residues 438 to 448 (DAKIKKQMNRH) are cytoplasmic.

It is found in the membrane. This is an uncharacterized protein from Saccharomyces cerevisiae (strain ATCC 204508 / S288c) (Baker's yeast).